The primary structure comprises 98 residues: MANIQFRPLHDRVVVRRVESENKTAGGIIIPDTAKEKPQEGEVIAVGNGALDDNGKRVPLEVKTGDRILFGKWSGTEVKINGEDLLIMKESDIMGIMG.

It belongs to the GroES chaperonin family. In terms of assembly, heptamer of 7 subunits arranged in a ring. Interacts with the chaperonin GroEL.

The protein localises to the cytoplasm. Functionally, together with the chaperonin GroEL, plays an essential role in assisting protein folding. The GroEL-GroES system forms a nano-cage that allows encapsulation of the non-native substrate proteins and provides a physical environment optimized to promote and accelerate protein folding. GroES binds to the apical surface of the GroEL ring, thereby capping the opening of the GroEL channel. The sequence is that of Co-chaperonin GroES from Bartonella tribocorum (strain CIP 105476 / IBS 506).